A 254-amino-acid polypeptide reads, in one-letter code: Alcohol dehydrogenase (254 aa).

10–33 (FVAGLGGIGLDTSREIVKSGPKNL) provides a ligand contact to NAD(+). Ser138 is a substrate binding site. The active-site Proton acceptor is the Tyr151.

It belongs to the short-chain dehydrogenases/reductases (SDR) family. Homodimer.

The catalysed reaction is a primary alcohol + NAD(+) = an aldehyde + NADH + H(+). The enzyme catalyses a secondary alcohol + NAD(+) = a ketone + NADH + H(+). This is Alcohol dehydrogenase (Adh) from Drosophila differens (Fruit fly).